The sequence spans 226 residues: 7-cyano-7-deazaguanine synthase (226 aa).

8–18 provides a ligand contact to ATP; that stretch reads ISGGLDSTTCL. Residues C188, C198, C201, and C204 each coordinate Zn(2+).

It belongs to the QueC family. Requires Zn(2+) as cofactor.

It carries out the reaction 7-carboxy-7-deazaguanine + NH4(+) + ATP = 7-cyano-7-deazaguanine + ADP + phosphate + H2O + H(+). Its pathway is purine metabolism; 7-cyano-7-deazaguanine biosynthesis. Catalyzes the ATP-dependent conversion of 7-carboxy-7-deazaguanine (CDG) to 7-cyano-7-deazaguanine (preQ(0)). The protein is 7-cyano-7-deazaguanine synthase of Coxiella burnetii (strain RSA 331 / Henzerling II).